A 1358-amino-acid chain; its full sequence is Tenascin-R (1358 aa).

Positions 1–31 are cleaved as a signal peptide; it reads MGIDGETVVLKNMLIGVNLILLGSMLKPSEC. Residues 37-58 are disordered; it reads TERAQRQTVEEEGGASSYNTSS. Asn55 carries N-linked (GlcNAc...) asparagine glycosylation. The stretch at 127-157 forms a coiled coil; the sequence is CASSSQVLQELLSRIEMLEREVSLLRDQCNT. Ser176 carries O-linked (Xyl...) (chondroitin sulfate) serine glycosylation. Asn180 and Asn198 each carry an N-linked (GlcNAc...) asparagine glycan. 3 consecutive EGF-like domains span residues 188–199, 219–230, and 250–261; these read CICNEGWFGKNC, CICDSEYSGDDC, and CVCEEPYTGEDC. An O-linked (Xyl...) (chondroitin sulfate) serine glycan is attached at Ser271. Residue Asn278 is glycosylated (N-linked (GlcNAc...) asparagine). One can recognise an EGF-like 4 domain in the interval 281-292; it reads CLCQEGYAGEDC. 2 disulfides stabilise this stretch: Cys297–Cys307 and Cys314–Cys323. An O-linked (Xyl...) (chondroitin sulfate) serine glycan is attached at Ser302. The 12-residue stretch at 312–323 folds into the EGF-like 5 domain; sequence CICEEGYQGPDC. Fibronectin type-III domains lie at 328–420, 421–505, 506–597, 598–687, 688–777, 778–865, 866–955, 956–1042, and 1043–1131; these read PPED…TPQG, LQFK…TVID, GPTQ…IDAP, KNLR…TELD, SPRD…FRPI, SHLH…TGID, PPKN…AMDS, PMDL…TLLD, and PPDN…GGRV. 3 N-linked (GlcNAc...) asparagine glycosylation sites follow: Asn392, Asn470, and Asn581. At Ser724 the chain carries Phosphoserine. 6 N-linked (GlcNAc...) asparagine glycosylation sites follow: Asn791, Asn869, Asn874, Asn1036, Asn1046, and Asn1261. A Fibrinogen C-terminal domain is found at 1129–1344; that stretch reads GRVFSHPQDC…FVEMKMRPYI (216 aa).

This sequence belongs to the tenascin family. As to quaternary structure, interacts with BCAN and ACAN in a calcium-dependent manner. Interacts with SCN2B, PTPRZ1, and CSPG3. Forms oligomers. Isoforms 1 and 2 form respectively trimeric (tribrachion) and dimeric kink-armed rodlike structures, which are linked by disulfide bridges. Interacts with CNTN1, TNC and FN1. In terms of processing, contains N-linked oligosaccharides with a sulfated carbohydrate structures. Contains N-linked oligosaccharides, O-linked sialylated structures and O-linked chondroitin sulfate glycosaminoglycans. In terms of tissue distribution, brain-specific.

The protein localises to the secreted. Its subcellular location is the extracellular space. The protein resides in the extracellular matrix. Neural extracellular matrix (ECM) protein involved in interactions with different cells and matrix components. Theses interactions can influence cellular behavior by either evoking a stable adhesion and differentiation, or repulsion and inhibition of neurite growth. Binding to cell surface gangliosides inhibits RGD-dependent integrin-mediated cell adhesion and results in an inhibition of PTK2/FAK1 (FAK) phosphorylation and cell detachment. Binding to membrane surface sulfatides results in a oligodendrocyte adhesion and differentiation. Interaction with CNTN1 induces a repulsion of neurons and an inhibition of neurite outgrowth. Interacts with SCN2B may play a crucial role in clustering and regulation of activity of sodium channels at nodes of Ranvier. TNR-linked chondroitin sulfate glycosaminoglycans are involved in the interaction with FN1 and mediates inhibition of cell adhesion and neurite outgrowth. The highly regulated addition of sulfated carbohydrate structure may modulate the adhesive properties of TNR over the course of development and during synapse maintenance. This is Tenascin-R (Tnr) from Mus musculus (Mouse).